The sequence spans 210 residues: Protein DrgA (210 aa).

This sequence belongs to the nitroreductase family. It depends on FMN as a cofactor.

Controls resistance to the herbicide Dinoseb and metronidazole. Involved in detoxification of Dinoseb via the reduction of the nitro group(s) and this process is accompanied by the formation of toxic superoxide anions. This chain is Protein DrgA (drgA), found in Synechocystis sp. (strain ATCC 27184 / PCC 6803 / Kazusa).